The sequence spans 545 residues: Cytosolic Fe-S cluster assembly factor NAR1 (545 aa).

[4Fe-4S] cluster contacts are provided by Cys20, Cys74, Cys77, Cys80, Cys188, Cys243, Cys454, and Cys458.

This sequence belongs to the NARF family.

Component of the cytosolic Fe/S protein assembly machinery. Required for maturation of extramitochondrial Fe/S proteins. May play a role in the transfer of pre-assembled Fe/S clusters to target apoproteins. This chain is Cytosolic Fe-S cluster assembly factor NAR1 (NAR1), found in Scheffersomyces stipitis (strain ATCC 58785 / CBS 6054 / NBRC 10063 / NRRL Y-11545) (Yeast).